The primary structure comprises 496 residues: Solute carrier family 2, facilitated glucose transporter member 3 (496 aa).

Residues 1–11 are Cytoplasmic-facing; it reads MADKKKITASL. The chain crosses the membrane as a helical span at residues 12 to 33; sequence IYAVSVAAIGSLQFGYNTGVIN. Over 34 to 65 the chain is Extracellular; it reads APEKIIQAFYNRTLSQRSGETISPELLTSLWS. The N-linked (GlcNAc...) asparagine glycan is linked to N44. Residues 66–86 form a helical membrane-spanning segment; it reads LSVAIFSVGGMIGSFSVSLFF. Over 87 to 91 the chain is Cytoplasmic; that stretch reads NRFGR. The chain crosses the membrane as a helical span at residues 92 to 112; sequence RNSMLLVNVLAFAGGALMALS. Over 113-119 the chain is Extracellular; it reads KIAKAVE. A helical membrane pass occupies residues 120 to 143; the sequence is MLIIGRFIIGLFCGLCTGFVPMYI. The Cytoplasmic segment spans residues 144 to 154; sequence SEVSPTSLRGA. A helical membrane pass occupies residues 155–175; that stretch reads FGTLNQLGIVVGILVAQIFGL. Position 160 (Q160) interacts with D-glucose. Residues 176–184 lie on the Extracellular side of the membrane; sequence EGIMGTEAL. A helical transmembrane segment spans residues 185 to 205; it reads WPLLLGFTIVPAVLQCVALLF. Residues 206–270 lie on the Cytoplasmic side of the membrane; the sequence is CPESPRFLLI…LFRSPNYRQP (65 aa). Residues 271-291 form a helical membrane-spanning segment; it reads IIISITLQLSQQLSGINAVFY. The tract at residues 278–280 is important for selectivity against fructose; the sequence is QLS. D-glucose-binding positions include 281 to 282 and N287; that span reads QQ. Residues 292-305 are Extracellular-facing; the sequence is YSTGIFERAGITQP. A helical membrane pass occupies residues 306–326; that stretch reads VYATIGAGVVNTVFTVVSLFL. D-glucose is bound at residue N316. Residues 327-332 lie on the Cytoplasmic side of the membrane; that stretch reads VERAGR. Residues 333 to 353 traverse the membrane as a helical segment; that stretch reads RTLHLVGLGGMAVCAAVMTIA. Residues 354–362 lie on the Extracellular side of the membrane; that stretch reads LALKEKWIR. A helical membrane pass occupies residues 363 to 388; the sequence is YISIVATFGFVALFEIGPGPIPWFIV. Residues E377 and W385 each contribute to the D-glucose site. At 389 to 398 the chain is on the cytoplasmic side; sequence AELFSQGPRP. The helical transmembrane segment at 399-419 threads the bilayer; it reads AAMAVAGCSNWTSNFLVGMLF. Residues 420–428 are Extracellular-facing; sequence PYAEKLCGP. Residues 429 to 449 traverse the membrane as a helical segment; that stretch reads YVFLIFLVFLLIFFIFTYFKV. Residues 450-496 lie on the Cytoplasmic side of the membrane; sequence PETKGRTFEDISRGFEEQVETSSPSSPPIEKNPMVEMNSIEPDKEVA. The tract at residues 464–496 is disordered; that stretch reads FEEQVETSSPSSPPIEKNPMVEMNSIEPDKEVA.

This sequence belongs to the major facilitator superfamily. Sugar transporter (TC 2.A.1.1) family. Glucose transporter subfamily.

It localises to the cell membrane. The protein resides in the perikaryon. Its subcellular location is the cell projection. It carries out the reaction D-glucose(out) = D-glucose(in). The enzyme catalyses D-galactose(in) = D-galactose(out). Its activity is regulated as follows. Deoxyglucose transport is inhibited by D-glucose, D-galactose and maltose. Galactose transport is inhibited by D-glucose and maltose. Its function is as follows. Facilitative glucose transporter. Can also mediate the uptake of various other monosaccharides across the cell membrane. Mediates the uptake of glucose, 2-deoxyglucose, galactose, mannose, xylose and fucose, and probably also dehydroascorbate. Does not mediate fructose transport. Required for mesendoderm differentiation. This is Solute carrier family 2, facilitated glucose transporter member 3 from Gallus gallus (Chicken).